Here is a 362-residue protein sequence, read N- to C-terminus: Formyltransferase/hydrolase complex Fhc subunit B (362 aa).

Octaheteromer. Part of the formyltransferase/hydrolase complex fhc; composed of FhcA, FhcB, FhcC and FhcD.

The protein localises to the cytoplasm. Its pathway is one-carbon metabolism; formaldehyde degradation; formate from formaldehyde (H(4)MPT route): step 4/5. Involved in the transformation of 5-formyl tetrahydromethanopterin (5-formyl-H(4)MPT) to methanofuran (MFR) and formate via the formylmethanofuran (formyl-MFR). This chain is Formyltransferase/hydrolase complex Fhc subunit B (fhcB), found in Methylorubrum extorquens (strain ATCC 14718 / DSM 1338 / JCM 2805 / NCIMB 9133 / AM1) (Methylobacterium extorquens).